A 102-amino-acid polypeptide reads, in one-letter code: NADH-quinone oxidoreductase subunit K (102 aa).

3 helical membrane-spanning segments follow: residues 6 to 26 (LEHG…GVMV), 30 to 50 (LLFM…AFVL), and 62 to 82 (IMFI…LAIV).

It belongs to the complex I subunit 4L family. NDH-1 is composed of 14 different subunits. Subunits NuoA, H, J, K, L, M, N constitute the membrane sector of the complex.

It localises to the cell inner membrane. It catalyses the reaction a quinone + NADH + 5 H(+)(in) = a quinol + NAD(+) + 4 H(+)(out). NDH-1 shuttles electrons from NADH, via FMN and iron-sulfur (Fe-S) centers, to quinones in the respiratory chain. The immediate electron acceptor for the enzyme in this species is believed to be ubiquinone. Couples the redox reaction to proton translocation (for every two electrons transferred, four hydrogen ions are translocated across the cytoplasmic membrane), and thus conserves the redox energy in a proton gradient. This is NADH-quinone oxidoreductase subunit K from Acinetobacter baylyi (strain ATCC 33305 / BD413 / ADP1).